We begin with the raw amino-acid sequence, 142 residues long: MIYNIYIFNKDGTCIYYEDWNKKKQSQNQSEDQKLLFGMLYSLKAFITSSSPKKIDDKTGFHCYKTSTYKLHYYETLSCIKFIIMSDPNVPDLRDDLKKIYSQIFVEYVIKNPIYKHGTTVKCDTFINQLNLYLKQMPSFSS.

The protein belongs to the TRAPP small subunits family. BET5 subfamily. In terms of assembly, part of the multisubunit TRAPP (transport protein particle) complex.

It is found in the golgi apparatus. It localises to the cis-Golgi network. The protein localises to the endoplasmic reticulum. Functionally, may play a role in vesicular transport from endoplasmic reticulum to Golgi. This chain is Trafficking protein particle complex subunit 1 (trappc1-1), found in Dictyostelium discoideum (Social amoeba).